The chain runs to 159 residues: MPREKGRKVVASNRKARHDYSILDTYEAGMALTGTEVKSLRAGRASLVDAFAQERNGELYLHGMHIPEYVQGTWTNHEPRRTRKLLLNRIEIDRLIGKTRESGLTIVPLQVYFSDGWAKVEIGVAKGKKSYDKRQDLAKRDAQREIARAAGRRGKGMAD.

It belongs to the SmpB family.

The protein localises to the cytoplasm. Required for rescue of stalled ribosomes mediated by trans-translation. Binds to transfer-messenger RNA (tmRNA), required for stable association of tmRNA with ribosomes. tmRNA and SmpB together mimic tRNA shape, replacing the anticodon stem-loop with SmpB. tmRNA is encoded by the ssrA gene; the 2 termini fold to resemble tRNA(Ala) and it encodes a 'tag peptide', a short internal open reading frame. During trans-translation Ala-aminoacylated tmRNA acts like a tRNA, entering the A-site of stalled ribosomes, displacing the stalled mRNA. The ribosome then switches to translate the ORF on the tmRNA; the nascent peptide is terminated with the 'tag peptide' encoded by the tmRNA and targeted for degradation. The ribosome is freed to recommence translation, which seems to be the essential function of trans-translation. The protein is SsrA-binding protein of Salinispora tropica (strain ATCC BAA-916 / DSM 44818 / JCM 13857 / NBRC 105044 / CNB-440).